We begin with the raw amino-acid sequence, 88 residues long: Large ribosomal subunit protein eL37 (88 aa).

4 residues coordinate Zn(2+): Cys-19, Cys-22, Cys-34, and Cys-37. The segment at 19-37 (CNRCGKRSFHVQKKTCASC) adopts a C4-type zinc-finger fold.

Belongs to the eukaryotic ribosomal protein eL37 family. Zn(2+) is required as a cofactor.

Its function is as follows. Binds to the 23S rRNA. The protein is Large ribosomal subunit protein eL37 (RPL37) of Debaryomyces hansenii (strain ATCC 36239 / CBS 767 / BCRC 21394 / JCM 1990 / NBRC 0083 / IGC 2968) (Yeast).